Consider the following 1025-residue polypeptide: MNKEHLTIYAYDWRVNSVEREIYHTSDRKSKDFELHLRVYGVNERGETTCVLMNKVTTSILLEFPDNYDVETNWSRVRMELMSAIFCSTDKTDKNVVMVKKQPLYGARHDKYFCKVSFSSDIGKRAFVMRVNGTVDRGSAATANRKGGKIHQPMKFPNGLTGDMIKIHGIDVPTELQVLEELDIPPCGWIETHNAYKCATITKRFTHQYRANVKTFKYCTRMECIPPVLKTMAWDIEARIHDISSPGLHIDDEIYMMSVSVSDGKDYLLTLGPVSNEDKIRFDEDTDIKVYQTEERLLLGFSELCRKLSVVARMGWNSSRFDCKVLLARANRLNCINSVLDLGMNPPGKISTNSGRTFGPIGDYEPIYIDTEGVVCLDVMEMFKSTYTKLPKFSLQYVSEVFLNEMAIITRTPLDMVHHQKQQRRVYNLMYSECLRQNIAFQDNMFNSKKVVTNDDVVGYSGAYVKDPVPGIHRRVGSLDVNSMYPTLIIAYNLCYTTVINYDDETPYKDEDFEVIEWEDHIGCEHNPIVVEFESLKKILYPKLQQNNTPSKRSPKGDGVVSNFFLPRNNKRCITNENDDVDEDEDQDILNMVTRTKQPSIEEQRATIRYKLLKARISAMSGKRVCETQRLKVLKSSVRPGILPNVVNKLLVERKRIRNIASVPGDPVEKALLDKRQLAYKITANSIYGATGASNGKLPCKNVAKAITALGRKVIKESIQMASDKGIPVIYGDTDSMYVQLSDDLEDPWHYLQSLGDEITSNLRKPMRIESEDNISDVLFLGKKSYICRKLLKDGGISEKLDYHGGIAVRRDHSGFVKSTHNKVVHAIFADVSLQNVKHVIFEECLKLMRRKIPIDELTKTSEVKSIGDGFTLKPSMKNTTTLNSWKLGDYTVKKHPQHDTLSKEYLKRYYLEQLPAHVQLEHKLMERGRSAVEGGRVEYLMVKRPGSKKSSASNIEEITYFKENSSIIQINELHYILQLVKPITKVCEAVWERSDIVVDAIKPICAYSKVLDEMNTKLYTPLVL.

Belongs to the DNA polymerase type-B family.

The enzyme catalyses DNA(n) + a 2'-deoxyribonucleoside 5'-triphosphate = DNA(n+1) + diphosphate. In terms of biological role, replicates the viral genome. Host DNA polymerases cannot substitute for the viral enzyme in this process. The polypeptide is DNA polymerase (Noctuidae (owlet moths)).